Consider the following 150-residue polypeptide: MNKVVLIGRLTKDPELRFAAGSGTAVARFTLAVNRQFKKDEADFISCIAFGKTGETIAQYITKGRQLAVSGNIRTGSYEAQDGTRRYTTDVVVESFDFIDSGNGGARGNSGFGSGNDFGGSFGMPDNSFSDSSFNSNDDMTPIDDGDIPF.

Residues 1–100 (MNKVVLIGRL…VVVESFDFID (100 aa)) form the SSB domain. The span at 129–139 (FSDSSFNSNDD) shows a compositional bias: low complexity. A disordered region spans residues 129–150 (FSDSSFNSNDDMTPIDDGDIPF). Over residues 141 to 150 (TPIDDGDIPF) the composition is skewed to acidic residues.

In terms of assembly, homotetramer.

In Clostridium perfringens (strain 13 / Type A), this protein is Single-stranded DNA-binding protein (ssb).